The following is a 637-amino-acid chain: Threonine--tRNA ligase (637 aa).

In terms of domain architecture, TGS spans 1 to 61; it reads MVTVTLPDGS…DADAQLAIVT (61 aa). Positions 244 to 535 are catalytic; the sequence is DHRRLAKQLD…LIEHHAGNFP (292 aa). Positions 335, 386, and 512 each coordinate Zn(2+).

This sequence belongs to the class-II aminoacyl-tRNA synthetase family. As to quaternary structure, homodimer. Zn(2+) is required as a cofactor.

It is found in the cytoplasm. It catalyses the reaction tRNA(Thr) + L-threonine + ATP = L-threonyl-tRNA(Thr) + AMP + diphosphate + H(+). Functionally, catalyzes the attachment of threonine to tRNA(Thr) in a two-step reaction: L-threonine is first activated by ATP to form Thr-AMP and then transferred to the acceptor end of tRNA(Thr). Also edits incorrectly charged L-seryl-tRNA(Thr). This is Threonine--tRNA ligase from Thiobacillus denitrificans (strain ATCC 25259 / T1).